Reading from the N-terminus, the 596-residue chain is NADH-quinone oxidoreductase subunit C/D (596 aa).

Positions 1–186 (MTDLTAQDAA…DPFELTKAKQ (186 aa)) are NADH dehydrogenase I subunit C. The tract at residues 210–596 (DFMFLNLGPN…IDFVMSDVDR (387 aa)) is NADH dehydrogenase I subunit D.

The protein in the N-terminal section; belongs to the complex I 30 kDa subunit family. In the C-terminal section; belongs to the complex I 49 kDa subunit family. In terms of assembly, NDH-1 is composed of 13 different subunits. Subunits NuoB, CD, E, F, and G constitute the peripheral sector of the complex.

The protein resides in the cell inner membrane. It catalyses the reaction a quinone + NADH + 5 H(+)(in) = a quinol + NAD(+) + 4 H(+)(out). NDH-1 shuttles electrons from NADH, via FMN and iron-sulfur (Fe-S) centers, to quinones in the respiratory chain. The immediate electron acceptor for the enzyme in this species is believed to be ubiquinone. Couples the redox reaction to proton translocation (for every two electrons transferred, four hydrogen ions are translocated across the cytoplasmic membrane), and thus conserves the redox energy in a proton gradient. The polypeptide is NADH-quinone oxidoreductase subunit C/D (Salmonella choleraesuis (strain SC-B67)).